The primary structure comprises 684 residues: Chaperone protein HtpG (684 aa).

The a; substrate-binding stretch occupies residues 1–329 (MSKKGTIGVT…SPDIPLNVSR (329 aa)). The interval 330–548 (SYLQSDANVK…FMRRMRDMAQ (219 aa)) is b. The segment at 549-684 (LQPGMSFYGE…EFIRRSQRLL (136 aa)) is c.

The protein belongs to the heat shock protein 90 family. In terms of assembly, homodimer.

The protein resides in the cytoplasm. Its function is as follows. Molecular chaperone. Has ATPase activity. The chain is Chaperone protein HtpG from Porphyromonas gingivalis (strain ATCC 33277 / DSM 20709 / CIP 103683 / JCM 12257 / NCTC 11834 / 2561).